Reading from the N-terminus, the 381-residue chain is Erythronate-4-phosphate dehydrogenase (381 aa).

Residues Ser45 and Thr66 each contribute to the substrate site. Residues Asp146, Thr174, 205–207 (ASR), and Asp231 contribute to the NAD(+) site. The active site involves Arg207. The active site involves Glu236. The active-site Proton donor is the His253. Residue Gly256 participates in NAD(+) binding. Tyr257 is a substrate binding site.

The protein belongs to the D-isomer specific 2-hydroxyacid dehydrogenase family. PdxB subfamily. In terms of assembly, homodimer.

The protein resides in the cytoplasm. It carries out the reaction 4-phospho-D-erythronate + NAD(+) = (R)-3-hydroxy-2-oxo-4-phosphooxybutanoate + NADH + H(+). The protein operates within cofactor biosynthesis; pyridoxine 5'-phosphate biosynthesis; pyridoxine 5'-phosphate from D-erythrose 4-phosphate: step 2/5. Catalyzes the oxidation of erythronate-4-phosphate to 3-hydroxy-2-oxo-4-phosphonooxybutanoate. The sequence is that of Erythronate-4-phosphate dehydrogenase from Stutzerimonas stutzeri (strain A1501) (Pseudomonas stutzeri).